Consider the following 369-residue polypeptide: Peptide chain release factor 2 (369 aa).

Q250 carries the N5-methylglutamine modification.

The protein belongs to the prokaryotic/mitochondrial release factor family. Post-translationally, methylated by PrmC. Methylation increases the termination efficiency of RF2.

It is found in the cytoplasm. Its function is as follows. Peptide chain release factor 2 directs the termination of translation in response to the peptide chain termination codons UGA and UAA. The sequence is that of Peptide chain release factor 2 (prfB) from Rickettsia typhi (strain ATCC VR-144 / Wilmington).